The sequence spans 109 residues: RNA-binding protein Hfq (109 aa).

One can recognise a Sm domain in the interval 9–68 (DPFLNALRKEKVSVSVYLVNGIKLQGQVEAFDQFCIVLRNTVNQMVYKHAISTIVPAKSV). The disordered stretch occupies residues 77-109 (PYHQNSNDEQDENVDDIHSDDLEIQENEGNIHE).

This sequence belongs to the Hfq family. In terms of assembly, homohexamer.

RNA chaperone that binds small regulatory RNA (sRNAs) and mRNAs to facilitate mRNA translational regulation in response to envelope stress, environmental stress and changes in metabolite concentrations. Also binds with high specificity to tRNAs. The sequence is that of RNA-binding protein Hfq from Francisella tularensis subsp. tularensis (strain FSC 198).